A 372-amino-acid chain; its full sequence is N-methyl-L-tryptophan oxidase (372 aa).

Residue 4–34 participates in FAD binding; that stretch reads DLIIIGSGSVGAAAGYYATRAGLKVLMTDAH. The residue at position 307 (Cys-307) is an S-8alpha-FAD cysteine.

It belongs to the MSOX/MTOX family. MTOX subfamily. As to quaternary structure, monomer. FAD serves as cofactor.

It carries out the reaction N(alpha)-methyl-L-tryptophan + O2 + H2O = L-tryptophan + formaldehyde + H2O2. Functionally, catalyzes the oxidative demethylation of N-methyl-L-tryptophan. The sequence is that of N-methyl-L-tryptophan oxidase from Salmonella arizonae (strain ATCC BAA-731 / CDC346-86 / RSK2980).